We begin with the raw amino-acid sequence, 237 residues long: Ribosomal RNA small subunit methyltransferase G (237 aa).

S-adenosyl-L-methionine contacts are provided by residues G78, F83, 129-130 (AE), and R148. A disordered region spans residues 218–237 (KKETPNKYPRKAGMPNKRPL).

It belongs to the methyltransferase superfamily. RNA methyltransferase RsmG family.

The protein resides in the cytoplasm. In terms of biological role, specifically methylates the N7 position of a guanine in 16S rRNA. This is Ribosomal RNA small subunit methyltransferase G from Streptococcus pneumoniae (strain JJA).